The following is a 578-amino-acid chain: 15-cis-phytoene desaturase, chloroplastic/chromoplastic (578 aa).

The N-terminal 87 residues, 1 to 87 (MDTGCLSSMN…PLENTINFLE (87 aa)), are a transit peptide targeting the chloroplast and chromoplast. FAD-binding positions include A115, 134–135 (EA), K142, 159–160 (HI), and Y165. Substrate is bound at residue R300. FAD-binding residues include I342 and D531. A substrate-binding site is contributed by A539. Residue M541 participates in FAD binding.

The protein belongs to the carotenoid/retinoid oxidoreductase family. Homotetramer. Homotetramer is the active form of the enzyme. It depends on FAD as a cofactor.

The protein localises to the plastid. Its subcellular location is the chloroplast. It localises to the chromoplast. It is found in the membrane. The enzyme catalyses 2 a plastoquinone + 15-cis-phytoene = 9,9',15-tri-cis-zeta-carotene + 2 a plastoquinol. Its pathway is carotenoid biosynthesis; lycopene biosynthesis. With respect to regulation, inhibited by the herbicide norflurazon (NFZ). Functionally, converts phytoene into zeta-carotene via the intermediary of phytofluene by the symmetrical introduction of two double bonds at the C-11 and C-11' positions of phytoene with a concomitant isomerization of two neighboring double bonds at the C9 and C9' positions from trans to cis. Active with decylplastoquinone (DPQ) as substrate. Also active with other benzoquinones, which are strongly preferred over naphthoquinones as substrates. The polypeptide is 15-cis-phytoene desaturase, chloroplastic/chromoplastic (PDS1) (Oryza sativa subsp. indica (Rice)).